An 81-amino-acid polypeptide reads, in one-letter code: Cytochrome b559 subunit alpha (81 aa).

A helical transmembrane segment spans residues 21–35 (VIHALTIPALFLAGW). Heme is bound at residue H23.

This sequence belongs to the PsbE/PsbF family. Heterodimer of an alpha subunit and a beta subunit. PSII is composed of 1 copy each of membrane proteins PsbA, PsbB, PsbC, PsbD, PsbE, PsbF, PsbH, PsbI, PsbJ, PsbK, PsbL, PsbM, PsbT, PsbX, PsbY, PsbZ, Psb30/Ycf12, peripheral proteins PsbO, CyanoQ (PsbQ), PsbU, PsbV and a large number of cofactors. It forms dimeric complexes. Requires heme b as cofactor.

The protein resides in the cellular thylakoid membrane. Its function is as follows. This b-type cytochrome is tightly associated with the reaction center of photosystem II (PSII). PSII is a light-driven water:plastoquinone oxidoreductase that uses light energy to abstract electrons from H(2)O, generating O(2) and a proton gradient subsequently used for ATP formation. It consists of a core antenna complex that captures photons, and an electron transfer chain that converts photonic excitation into a charge separation. This is Cytochrome b559 subunit alpha from Synechococcus sp. (strain JA-2-3B'a(2-13)) (Cyanobacteria bacterium Yellowstone B-Prime).